The chain runs to 250 residues: Capsid protein (250 aa).

Residues 1 to 31 (MPKRDAPWLMAGTSKVSRSGNYSPSGGMGSK) form a disordered region. Positions 3-19 (KRDAPWLMAGTSKVSRS) match the Bipartite nuclear localization signal motif. A compositionally biased stretch (polar residues) spans 14 to 31 (SKVSRSGNYSPSGGMGSK). The short motif at 34–48 (KANAWVNRPMYRKPR) is the Nuclear localization signal element. Residues 53-70 (YKSPDVPKGCEGPCKVQS) fold into a zinc finger. The Nuclear export signal motif lies at 95 to 116 (ITHRVGKRFCVKSVYILGKIWM). Positions 194-241 (RRFWKVNNHVVYNHQEAGKYENHTENALLLYMACTHASNPVYATLKIR) match the Bipartite nuclear localization signal motif.

The protein belongs to the geminiviridae capsid protein family. In terms of assembly, homomultimer. Binds to single-stranded and double-stranded viral DNA. Interacts (via nuclear localization signals) with host importin alpha-1a.

The protein resides in the virion. The protein localises to the host nucleus. In terms of biological role, encapsidates the viral DNA into characteristic twinned ('geminate') particles. Binds the genomic viral ssDNA and shuttles it into and out of the cell nucleus. The CP of bipartite geminiviruses is not required for cell-to-cell or systemic movement. This Bean golden yellow mosaic virus (isolate Puerto Rico) (BGYMV) protein is Capsid protein.